The following is a 146-amino-acid chain: Hemoglobin subunit beta-1 (146 aa).

A Globin domain is found at 2 to 146 (EWTDQERATI…VVSALGKQYH (145 aa)). Heme b-binding residues include His-63 and His-92.

The protein belongs to the globin family. In terms of assembly, hb1 is a heterotetramer of two alpha-1 chains and two beta-1 chains. Hb2 is a heterotetramer of two alpha-2 chains and two beta-1 chains. HbC is a heterotetramer of two alpha-1 chains and two beta-2 chains. As to expression, red blood cells.

Involved in oxygen transport from gills to the various peripheral tissues. In Eleginops maclovinus (Patagonian blennie), this protein is Hemoglobin subunit beta-1.